An 800-amino-acid polypeptide reads, in one-letter code: MKFGREFETQMIQEWKEAYMDYRSLKSIVKQILRYRLQKQQRPPPPPPPPSTGDTVPLKTDGGEGGGGGGGGGPGLSRRISLYRAFSGLTNRASRSPKKSHKHHNPLSSKRHHHHHNHHHYHLFDDDEEQIILINEDETASYTTTFLNSAEEGGEMEVQFFRRLDGEFNKVLRFYKQKVENVMEEADELSRQLNVLIALRVKVENPHVHLPPDLNSVASAPSSPHSTMRTPAPSPMDVIREMEKTEDKKVFKPAPVEMLDHVKLKIDPETPLLTLKMMILGLPSEQTFSKPELRRAEELMNRAFVEFYQKLRFLKSYCFLNQLAFAKILKKYDKTTSRNASKPYLNTVDHSYLGSCDEVSRLMSRVEATFIKHFANGNHREGMKCLRPKTKREKHRITYFLGFFSGCAVALAIAITVLVHIRGLTKSEGRHQYMENIFPLYSLFGFVAVHLFMYAADIYFWSRYRVNYPFIFGFEQGNDLGYREVLLVGSGLAVLTFGGVISNLDMEMDPRTKSFSVITELVPLALLVCLMMVLFCPFNIIYRSSRYFFVGSVFRCLLSPLYKVILPDFFLADQLTSQVQTFRSLLFYVCYYGWGGDFKRRTHTCYDSEIYKELYLVVAIIPYWFRFAQSIRRLVEEKDKMHGLNALKYLSTILAVAARTIFEMKRGTYWLTVAVTTSSIATLFNTYWDIFRDWGLMNRNSKNPWLRDKLLVPYKSIYFIVMVANVVLRLAWMQTVLGIKEAPFLHKRALVAVVASLEIVRRGIWNFFRLENEHLNNVGKYRAFKSVPLPFQELGGSKSV.

In terms of domain architecture, SPX spans 1–346 (MKFGREFETQ…SRNASKPYLN (346 aa)). The Cytoplasmic portion of the chain corresponds to 1-398 (MKFGREFETQ…KTKREKHRIT (398 aa)). Disordered regions lie at residues 38–77 (QKQQ…PGLS), 91–119 (NRAS…HNHH), and 212–234 (PDLN…PAPS). The segment covering 42–51 (RPPPPPPPPS) has biased composition (pro residues). Positions 63 to 75 (GEGGGGGGGGGPG) are enriched in gly residues. The span at 95–119 (RSPKKSHKHHNPLSSKRHHHHHNHH) shows a compositional bias: basic residues. Positions 216 to 229 (SVASAPSSPHSTMR) are enriched in polar residues. A helical transmembrane segment spans residues 399 to 419 (YFLGFFSGCAVALAIAITVLV). At 420 to 439 (HIRGLTKSEGRHQYMENIFP) the chain is on the extracellular side. Residues 440–460 (LYSLFGFVAVHLFMYAADIYF) form a helical membrane-spanning segment. Topologically, residues 461–483 (WSRYRVNYPFIFGFEQGNDLGYR) are cytoplasmic. A helical membrane pass occupies residues 484 to 504 (EVLLVGSGLAVLTFGGVISNL). The Extracellular portion of the chain corresponds to 505–520 (DMEMDPRTKSFSVITE). Residues 521 to 541 (LVPLALLVCLMMVLFCPFNII) traverse the membrane as a helical segment. Residues 542–670 (YRSSRYFFVG…IFEMKRGTYW (129 aa)) are Cytoplasmic-facing. In terms of domain architecture, EXS spans 606–800 (YDSEIYKELY…FQELGGSKSV (195 aa)). The chain crosses the membrane as a helical span at residues 671–691 (LTVAVTTSSIATLFNTYWDIF). Topologically, residues 692–718 (RDWGLMNRNSKNPWLRDKLLVPYKSIY) are extracellular. A helical transmembrane segment spans residues 719–739 (FIVMVANVVLRLAWMQTVLGI). Over 740 to 800 (KEAPFLHKRA…FQELGGSKSV (61 aa)) the chain is Cytoplasmic.

Belongs to the SYG1 (TC 2.A.94) family. As to expression, specifically expressed in pollen grains.

The protein localises to the cell membrane. Functionally, may transport inorganic phosphate (Pi). The protein is Phosphate transporter PHO1 homolog 9 (PHO1-H9) of Arabidopsis thaliana (Mouse-ear cress).